The primary structure comprises 217 residues: 3-oxo-tetronate 4-phosphate decarboxylase (217 aa).

Zn(2+) contacts are provided by histidine 93 and histidine 95. Catalysis depends on tyrosine 120, which acts as the Proton donor.

Belongs to the aldolase class II family. AraD/FucA subfamily. Requires Zn(2+) as cofactor.

The enzyme catalyses 3-dehydro-4-O-phospho-D-erythronate + H(+) = dihydroxyacetone phosphate + CO2. The catalysed reaction is 3-dehydro-4-O-phospho-L-erythronate + H(+) = dihydroxyacetone phosphate + CO2. Catalyzes the decarboxylation of 3-oxo-tetronate 4-phosphate to dihydroxyacetone phosphate (DHAP) and CO(2). The polypeptide is 3-oxo-tetronate 4-phosphate decarboxylase (Cupriavidus necator (strain ATCC 17699 / DSM 428 / KCTC 22496 / NCIMB 10442 / H16 / Stanier 337) (Ralstonia eutropha)).